The primary structure comprises 425 residues: MLNIKWIRENQELFDEKLSQRFIEPMSSKIAMLDQEKRKITSLIQEFQHARKVKSKILGNMVSKSGEEFEELQRDVNHINEKLAELEQNLDNNNELNELLNMLPNIPDEEVPYGIDGSMNKLVRAYGKTNKNALNKQHFELGTKLNLMDFEQTAKISGSRFVTLKGDLAKLERALINFMIDIHTKEFDFFEISPPFLVRDRAMYNAGQLPKFSEESFITTNGYRLIPTAEVSLVNIVADTIIQREKLPMRYVAYTTCFRSEAGSSGRDTRGMIRLHQFGKVELVSITTPEESKNEHEYITNASETILKKLDLPYRVMLLCTGDMGFAAKKTYDIEVWLPGQNQYREIASCSNCGDFQARRMKARYKEFGSNETTLVHTLNASGLPIGRTIVAILENYQNNDGSITIPDVLINYMGGLQKITTYSE.

228 to 230 (TAE) provides a ligand contact to L-serine. An ATP-binding site is contributed by 259-261 (RSE). Glutamate 282 contributes to the L-serine binding site. 346 to 349 (EIAS) is a binding site for ATP. An L-serine-binding site is contributed by serine 382.

It belongs to the class-II aminoacyl-tRNA synthetase family. Type-1 seryl-tRNA synthetase subfamily. Homodimer. The tRNA molecule binds across the dimer.

The protein localises to the cytoplasm. The enzyme catalyses tRNA(Ser) + L-serine + ATP = L-seryl-tRNA(Ser) + AMP + diphosphate + H(+). The catalysed reaction is tRNA(Sec) + L-serine + ATP = L-seryl-tRNA(Sec) + AMP + diphosphate + H(+). The protein operates within aminoacyl-tRNA biosynthesis; selenocysteinyl-tRNA(Sec) biosynthesis; L-seryl-tRNA(Sec) from L-serine and tRNA(Sec): step 1/1. Its function is as follows. Catalyzes the attachment of serine to tRNA(Ser). Is also able to aminoacylate tRNA(Sec) with serine, to form the misacylated tRNA L-seryl-tRNA(Sec), which will be further converted into selenocysteinyl-tRNA(Sec). This is Serine--tRNA ligase from Rickettsia prowazekii (strain Madrid E).